The primary structure comprises 319 residues: tRNA-cytidine(32) 2-sulfurtransferase (319 aa).

The PP-loop motif signature appears at 49–54 (SGGKDS). 3 residues coordinate [4Fe-4S] cluster: Cys-124, Cys-127, and Cys-215.

This sequence belongs to the TtcA family. In terms of assembly, homodimer. Mg(2+) serves as cofactor. Requires [4Fe-4S] cluster as cofactor.

It is found in the cytoplasm. The enzyme catalyses cytidine(32) in tRNA + S-sulfanyl-L-cysteinyl-[cysteine desulfurase] + AH2 + ATP = 2-thiocytidine(32) in tRNA + L-cysteinyl-[cysteine desulfurase] + A + AMP + diphosphate + H(+). It functions in the pathway tRNA modification. In terms of biological role, catalyzes the ATP-dependent 2-thiolation of cytidine in position 32 of tRNA, to form 2-thiocytidine (s(2)C32). The sulfur atoms are provided by the cysteine/cysteine desulfurase (IscS) system. This chain is tRNA-cytidine(32) 2-sulfurtransferase, found in Shewanella amazonensis (strain ATCC BAA-1098 / SB2B).